Reading from the N-terminus, the 127-residue chain is Small ribosomal subunit protein uS11 (127 aa).

This sequence belongs to the universal ribosomal protein uS11 family. As to quaternary structure, part of the 30S ribosomal subunit. Interacts with proteins S7 and S18. Binds to IF-3.

Its function is as follows. Located on the platform of the 30S subunit, it bridges several disparate RNA helices of the 16S rRNA. Forms part of the Shine-Dalgarno cleft in the 70S ribosome. The protein is Small ribosomal subunit protein uS11 of Rhodopirellula baltica (strain DSM 10527 / NCIMB 13988 / SH1).